The chain runs to 502 residues: Glycerol kinase (502 aa).

T14 lines the ADP pocket. The ATP site is built by T14 and T15. Sn-glycerol 3-phosphate is bound at residue T14. Residue R18 coordinates ADP. Sn-glycerol 3-phosphate is bound by residues R84, E85, Y136, and D245. Residues R84, E85, Y136, D245, and Q246 each contribute to the glycerol site. Residues T267 and G314 each contribute to the ADP site. The ATP site is built by T267, G314, Q318, and G415. 2 residues coordinate ADP: G415 and N419.

Belongs to the FGGY kinase family.

The enzyme catalyses glycerol + ATP = sn-glycerol 3-phosphate + ADP + H(+). Its pathway is polyol metabolism; glycerol degradation via glycerol kinase pathway; sn-glycerol 3-phosphate from glycerol: step 1/1. With respect to regulation, inhibited by fructose 1,6-bisphosphate (FBP). Key enzyme in the regulation of glycerol uptake and metabolism. Catalyzes the phosphorylation of glycerol to yield sn-glycerol 3-phosphate. This is Glycerol kinase from Acaryochloris marina (strain MBIC 11017).